Consider the following 967-residue polypeptide: Probable helicase DDB_G0274399 (967 aa).

The segment at 161-192 (EMTDDEDTAPTSAATHVGAPTKSTTTTTTTTT) is disordered. An ATP-binding site is contributed by 357-364 (GPPGTGKT). 2 disordered regions span residues 529-553 (SAIPSSSASTAAATSGSSRSTQDTS) and 892-967 (QKQK…RTRR). The stretch at 890–949 (NLQKQKDIEKRKKQHKRQKQKSKENDKKKQLKKRKELNNNDNNNNNKESSNKEVQEITNA) forms a coiled coil. The segment covering 900–909 (RKKQHKRQKQ) has biased composition (basic residues). A compositionally biased stretch (low complexity) spans 928 to 937 (NNDNNNNNKE).

The protein belongs to the DNA2/NAM7 helicase family.

It is found in the nucleus. The chain is Probable helicase DDB_G0274399 from Dictyostelium discoideum (Social amoeba).